Reading from the N-terminus, the 1068-residue chain is Disheveled-associated activator of morphogenesis 2 (1068 aa).

Positions 40 to 416 (SPIPNAEELN…QIVLQDERGV (377 aa)) constitute a GBD/FH3 domain. A coiled-coil region spans residues 434–516 (MLINENEVKQ…LVAQLSELST (83 aa)). Residues 514–586 (LSTGPVSSPP…MGLPLPQDPY (73 aa)) form a disordered region. Positions 518–594 (PVSSPPPPGG…PYPSSDVPLR (77 aa)) constitute an FH1 domain. Over residues 540-572 (LPPPPPPLPFACCPPPPPPPLPPGGPPTPPGAP) the composition is skewed to pro residues. Residues 595-994 (KKRVPQPSHP…EERRARMEAM (400 aa)) form the FH2 domain. Ser-1015 carries the phosphoserine modification. Residues 1016–1048 (SLEEGGEFDDLVSALRSGEVFDKDLCKLKRSRK) enclose the DAD domain.

This sequence belongs to the formin homology family. Interacts with DVL3. Interacts with INF2. Expressed in most tissues examined. Expressed in kidney glomeruli.

Functionally, key regulator of the Wnt signaling pathway, which is required for various processes during development, such as dorsal patterning, determination of left/right symmetry or myelination in the central nervous system. Acts downstream of Wnt ligands and upstream of beta-catenin (CTNNB1). Required for canonical Wnt signaling pathway during patterning in the dorsal spinal cord by promoting the aggregation of Disheveled (Dvl) complexes, thereby clustering and formation of Wnt receptor signalosomes and potentiating Wnt activity. During dorsal patterning of the spinal cord, inhibits oligodendrocytes differentiation via interaction with PIP5K1A. Also regulates non-canonical Wnt signaling pathway. Acts downstream of PITX2 in the developing gut and is required for left/right asymmetry within dorsal mesentery: affects mesenchymal condensation by lengthening cadherin-based junctions through WNT5A and non-canonical Wnt signaling, inducing polarized condensation in the left dorsal mesentery necessary to initiate gut rotation. Together with DAAM1, required for myocardial maturation and sarcomere assembly. Is a regulator of actin nucleation and elongation, filopodia formation and podocyte migration. The chain is Disheveled-associated activator of morphogenesis 2 from Homo sapiens (Human).